A 315-amino-acid polypeptide reads, in one-letter code: Beta-ketoacyl-[acyl-carrier-protein] synthase III (315 aa).

Residues Cys115 and His244 contribute to the active site. Residues 245 to 249 (QANAR) are ACP-binding. Asn274 is an active-site residue.

This sequence belongs to the thiolase-like superfamily. FabH family. Homodimer.

Its subcellular location is the cytoplasm. It catalyses the reaction malonyl-[ACP] + acetyl-CoA + H(+) = 3-oxobutanoyl-[ACP] + CO2 + CoA. It functions in the pathway lipid metabolism; fatty acid biosynthesis. Its function is as follows. Catalyzes the condensation reaction of fatty acid synthesis by the addition to an acyl acceptor of two carbons from malonyl-ACP. Catalyzes the first condensation reaction which initiates fatty acid synthesis and may therefore play a role in governing the total rate of fatty acid production. Possesses both acetoacetyl-ACP synthase and acetyl transacylase activities. Its substrate specificity determines the biosynthesis of branched-chain and/or straight-chain of fatty acids. The protein is Beta-ketoacyl-[acyl-carrier-protein] synthase III of Rubrobacter xylanophilus (strain DSM 9941 / JCM 11954 / NBRC 16129 / PRD-1).